Consider the following 400-residue polypeptide: Acetyl-CoA decarbonylase/synthase complex subunit delta (400 aa).

This sequence belongs to the CdhD family. Heterodimer of delta and gamma chains. The ACDS complex is made up of alpha, epsilon, beta, gamma and delta chains with a probable stoichiometry of (alpha(2)epsilon(2))(4)-beta(8)-(gamma(1)delta(1))(8).

Functionally, part of a complex that catalyzes the reversible cleavage of acetyl-CoA, allowing autotrophic growth from CO(2). Probably maintains the overall quaternary structure of the ACDS complex. This is Acetyl-CoA decarbonylase/synthase complex subunit delta from Methanopyrus kandleri (strain AV19 / DSM 6324 / JCM 9639 / NBRC 100938).